The chain runs to 836 residues: Tuftelin-interacting protein 11 (836 aa).

The span at 1-13 (MSLSHLYRDGEGH) shows a compositional bias: basic and acidic residues. Disordered regions lie at residues 1–31 (MSLSHLYRDGEGHMDDDEDERENFEITDWDL), 54–73 (WAERDSDEERPSFGGKRARD), and 85–136 (LKKG…AGGT). The segment at 1 to 50 (MSLSHLYRDGEGHMDDDEDERENFEITDWDLQNEFNPNRQRHWQTKEEAT) is required for interaction with DHX15. Serine 2 carries the post-translational modification Phosphoserine. A compositionally biased stretch (acidic residues) spans 14 to 28 (MDDDEDERENFEITD). Residues 54 to 64 (WAERDSDEERP) are compositionally biased toward basic and acidic residues. Residues serine 59 and serine 98 each carry the phosphoserine modification. Residues 91–102 (EEAELEDSDDEE) are compositionally biased toward acidic residues. The span at 103–116 (KPVKQDEFPKDFGP) shows a compositional bias: basic and acidic residues. Serine 144 carries the phosphoserine modification. Residues 149–195 (TKGIGQKLLQKMGYVPGRGLGKNAQGIINPIEAKQRKGKGAVGAYGS) enclose the G-patch domain. Residues 183-236 (QRKGKGAVGAYGSERTTQSLQDFPVVDSEEEAEEEFQKELSQWRKDPSGSKKKP) are disordered. Serine 210 bears the Phosphoserine mark. Residues 217–231 (EFQKELSQWRKDPSG) show a composition bias toward basic and acidic residues. Residues 699–704 (VKDKFN) carry the Nuclear localization signal motif. The segment at 709-733 (IMNRAVSSNVGAYMQPGARENIAYL) is required for nuclear speckle localization.

This sequence belongs to the TFP11/STIP family. As to quaternary structure, identified in the spliceosome C complex. Found in the Intron Large (IL) complex, a post-mRNA release spliceosomal complex containing the excised intron, U2, U5 and U6 snRNPs, and splicing factors. Interacts with TUFT1. Interacts with DHX15; indicative for a recruitment of DHX15 to the IL complex. Interacts with GCFC2.

It is found in the cytoplasm. Its subcellular location is the nucleus. In terms of biological role, involved in pre-mRNA splicing, specifically in spliceosome disassembly during late-stage splicing events. Intron turnover seems to proceed through reactions in two lariat-intron associated complexes termed Intron Large (IL) and Intron Small (IS). In cooperation with DHX15 seems to mediate the transition of the U2, U5 and U6 snRNP-containing IL complex to the snRNP-free IS complex leading to efficient debranching and turnover of excised introns. May play a role in the differentiation of ameloblasts and odontoblasts or in the forming of the enamel extracellular matrix. This Sus scrofa (Pig) protein is Tuftelin-interacting protein 11 (TFIP11).